Consider the following 279-residue polypeptide: Energy-coupling factor transporter ATP-binding protein EcfA1 (279 aa).

The region spanning Val6–Gly240 is the ABC transporter domain. Gly40 to Ser47 serves as a coordination point for ATP.

The protein belongs to the ABC transporter superfamily. Energy-coupling factor EcfA family. In terms of assembly, forms a stable energy-coupling factor (ECF) transporter complex composed of 2 membrane-embedded substrate-binding proteins (S component), 2 ATP-binding proteins (A component) and 2 transmembrane proteins (T component).

Its subcellular location is the cell membrane. Functionally, ATP-binding (A) component of a common energy-coupling factor (ECF) ABC-transporter complex. Unlike classic ABC transporters this ECF transporter provides the energy necessary to transport a number of different substrates. The sequence is that of Energy-coupling factor transporter ATP-binding protein EcfA1 from Listeria monocytogenes serotype 4b (strain F2365).